A 506-amino-acid polypeptide reads, in one-letter code: Gamma-aminobutyric acid receptor subunit epsilon (506 aa).

The first 22 residues, 1 to 22 (MLSKVLPVLLGILLILQSRVEG), serve as a signal peptide directing secretion. Residues 23–66 (PQTESKNEASSRDVVYGPQPQPLENQLLSEETKSTETETGSRVG) form a disordered region. The Extracellular portion of the chain corresponds to 23 to 280 (PQTESKNEAS…FNVSRRFGYV (258 aa)). N134 carries an N-linked (GlcNAc...) asparagine glycan. An intrachain disulfide couples C195 to C209. An N-linked (GlcNAc...) asparagine glycan is attached at N252. Residues 281 to 301 (AFQNYVPSSVTTMLSWVSFWI) traverse the membrane as a helical segment. Residues 302-307 (KTESAP) are Cytoplasmic-facing. Residues 308 to 327 (ARTSLGITSVLTMTTLGTFS) traverse the membrane as a helical segment. Residues 328–343 (RKNFPRVSYITALDFY) lie on the Extracellular side of the membrane. Residues 344–364 (IAICFVFCFCALLEFAVLNFL) form a helical membrane-spanning segment. The Cytoplasmic segment spans residues 365–485 (IYNQTKAHAS…HVYRLDNYSR (121 aa)). A disordered region spans residues 413-438 (EGSDGEERPSCSAQQPPSPGSPEGPR). Residues 486–506 (VVFPVTFFFFNVLYWLVCLNL) form a helical membrane-spanning segment.

This sequence belongs to the ligand-gated ion channel (TC 1.A.9) family. Gamma-aminobutyric acid receptor (TC 1.A.9.5) subfamily. GABRE sub-subfamily. In terms of assembly, heteropentamer, formed by a combination of alpha (GABRA1-6), beta (GABRB1-3), gamma (GABRG1-3), delta (GABRD), epsilon (GABRE), rho (GABRR1-3), pi (GABRP) and theta (GABRQ) chains, each subunit exhibiting distinct physiological and pharmacological properties. Expressed in many tissues. Highest levels of expression in adult heart and placenta.

The protein resides in the cell membrane. Its subcellular location is the postsynaptic cell membrane. The catalysed reaction is chloride(in) = chloride(out). Its activity is regulated as follows. Potentiated by pentobarbital, loreclezole, and lanthanum and inhibited by zinc and furosemide. Introduction of the epsilon subunit to the receptor complex resulted in diminished modulatory effects by etomidate, propofol, pregnanolone and flurazepam. In terms of biological role, epsilon subunit of the heteropentameric ligand-gated chloride channel gated by gamma-aminobutyric acid (GABA), a major inhibitory neurotransmitter in the brain. GABA-gated chloride channels, also named GABA(A) receptors (GABAAR), consist of five subunits arranged around a central pore and contain GABA active binding site(s) located at the alpha and beta subunit interfaces. When activated by GABA, GABAARs selectively allow the flow of chloride anions across the cell membrane down their electrochemical gradient. GABAARs containing epsilon subunits also permit spontaneous chloride channel activity while preserving the structural information required for GABA-gated openings. GABARs containing epsilon subunit may regulate cardiac function. The chain is Gamma-aminobutyric acid receptor subunit epsilon from Homo sapiens (Human).